The following is a 373-amino-acid chain: Peptide chain release factor 2 (373 aa).

Glutamine 251 bears the N5-methylglutamine mark.

This sequence belongs to the prokaryotic/mitochondrial release factor family. Methylated by PrmC. Methylation increases the termination efficiency of RF2.

The protein resides in the cytoplasm. Peptide chain release factor 2 directs the termination of translation in response to the peptide chain termination codons UGA and UAA. This chain is Peptide chain release factor 2, found in Salinispora tropica (strain ATCC BAA-916 / DSM 44818 / JCM 13857 / NBRC 105044 / CNB-440).